We begin with the raw amino-acid sequence, 484 residues long: MVTKTLSVLFVASEVEGLIKSGGLADVAKALPKALQTLEQDVRVTIPAYRNIPNIDSAEVILSTELDHWPHTAYQVKKLSVEGVQIFAIECAKYFDRPEMYAENNQAYADNGERFSFFSTACLDMLPKLAFQPDIIHANDWHTGFVPFLLKSRYQQHDFFENTRSVISIHNAVFKGVFAYDELQCLSEMHSYNVPEASVSDTHVTMLKAGVMCADKINAVSPTYAEELKTELGSHGMAAEFQHRSADLFGILNGCDYGAWNPETDAFLPRKFKATKHSMTRGKSACKQKLQQDVGLPVTDCAVYGMVCRLTNQKGVHYLLPIIEQFLKNELQIVIVGTGDPVLASQLKELSALHSDKFSFVEAYNNELAHLVEAGSDFFLMPSEFEPCGLNQIYSMAYGTLPIVRSVGGLKDSVNDYDQEPEIATGFAFEEPTPQALLAVLHRSLLLYAQNPSEIKRVQLYAMQQDFSWEDAAEEYLAMYHSAF.

Lysine 20 is a binding site for ADP-alpha-D-glucose.

This sequence belongs to the glycosyltransferase 1 family. Bacterial/plant glycogen synthase subfamily.

It carries out the reaction [(1-&gt;4)-alpha-D-glucosyl](n) + ADP-alpha-D-glucose = [(1-&gt;4)-alpha-D-glucosyl](n+1) + ADP + H(+). Its pathway is glycan biosynthesis; glycogen biosynthesis. Functionally, synthesizes alpha-1,4-glucan chains using ADP-glucose. This is Glycogen synthase from Vibrio atlanticus (strain LGP32) (Vibrio splendidus (strain Mel32)).